The primary structure comprises 345 residues: Pyruvate dehydrogenase E1 component subunit alpha (345 aa).

Heterodimer of an alpha and a beta chain. The cofactor is thiamine diphosphate.

It catalyses the reaction N(6)-[(R)-lipoyl]-L-lysyl-[protein] + pyruvate + H(+) = N(6)-[(R)-S(8)-acetyldihydrolipoyl]-L-lysyl-[protein] + CO2. Functionally, the pyruvate dehydrogenase complex catalyzes the overall conversion of pyruvate to acetyl-CoA and CO(2). It contains multiple copies of three enzymatic components: pyruvate dehydrogenase (E1), dihydrolipoamide acetyltransferase (E2) and lipoamide dehydrogenase (E3). This is Pyruvate dehydrogenase E1 component subunit alpha (pdhA) from Acholeplasma laidlawii.